The chain runs to 211 residues: Proteasome subunit beta 1 (211 aa).

A propeptide spans 1–17 (MVIMGNELQLENKILKG) (removed in mature form; by autocatalysis). Residue Thr-18 is the Nucleophile of the active site.

The protein belongs to the peptidase T1B family. In terms of assembly, the 20S proteasome core is composed of 14 alpha and 14 beta subunits that assemble into four stacked heptameric rings, resulting in a barrel-shaped structure. The two inner rings, each composed of seven catalytic beta subunits, are sandwiched by two outer rings, each composed of seven alpha subunits. The catalytic chamber with the active sites is on the inside of the barrel. Has a gated structure, the ends of the cylinder being occluded by the N-termini of the alpha-subunits. Is capped at one or both ends by the proteasome regulatory ATPase, PAN.

The protein localises to the cytoplasm. The enzyme catalyses Cleavage of peptide bonds with very broad specificity.. The formation of the proteasomal ATPase PAN-20S proteasome complex, via the docking of the C-termini of PAN into the intersubunit pockets in the alpha-rings, triggers opening of the gate for substrate entry. Interconversion between the open-gate and close-gate conformations leads to a dynamic regulation of the 20S proteasome proteolysis activity. Functionally, component of the proteasome core, a large protease complex with broad specificity involved in protein degradation. This is Proteasome subunit beta 1 from Saccharolobus islandicus (strain M.16.27) (Sulfolobus islandicus).